Here is a 117-residue protein sequence, read N- to C-terminus: MPRAKGGFKSRQRRNKVLKLAKGYRGARSKLFRSATEAVDRALNYAFRDRRVKKRDFRSLWIMRINAASRLNGLSYSKFIFGLKKADVQIDRKVLADIAITDPKGFAEISAVAKAQL.

It belongs to the bacterial ribosomal protein bL20 family.

Functionally, binds directly to 23S ribosomal RNA and is necessary for the in vitro assembly process of the 50S ribosomal subunit. It is not involved in the protein synthesizing functions of that subunit. The chain is Large ribosomal subunit protein bL20 from Trichlorobacter lovleyi (strain ATCC BAA-1151 / DSM 17278 / SZ) (Geobacter lovleyi).